A 631-amino-acid polypeptide reads, in one-letter code: Mini-chromosome maintenance complex-binding protein (631 aa).

2 stretches are compositionally biased toward polar residues: residues 148–157 (ARVVPSTSYV) and 173–192 (TQCQ…SESH). Residues 148–218 (ARVVPSTSYV…SSSSHCTSSL (71 aa)) are disordered. The segment covering 193–202 (GNTEPKRQET) has biased composition (basic and acidic residues). Residues 206 to 217 (SQDSSSSHCTSS) are compositionally biased toward low complexity.

This sequence belongs to the MCMBP family. Interacts with the mcm complex: associates with the mcm3-7 complex which lacks mcm2, while it does not interact with the mcm complex when mcm2 is present (mcm2-7 complex).

The protein resides in the nucleus. Functionally, associated component of the mcm complex that acts as a regulator of DNA replication. Binds to the MCM complex during late S phase and promotes the disassembly of the mcm complex from chromatin, thereby acting as a key regulator of pre-replication complex (pre-RC) unloading from replicated DNA. Can dissociate the mcm complex without addition of ATP; probably acts by destabilizing interactions of each individual subunits of the mcm complex. Required for sister chromatid cohesion. This is Mini-chromosome maintenance complex-binding protein (mcmbp) from Danio rerio (Zebrafish).